We begin with the raw amino-acid sequence, 524 residues long: Probable plastidic glucose transporter 1 (524 aa).

A run of 12 helical transmembrane segments spans residues 88-108 (MANFLFGYHIGVMNGPIVSIA), 122-142 (LVVSIFIAGAFIGSIVAGPLV), 151-171 (FQIFTIPLILGALVSAQAHSL), 179-199 (FLVGLGIGVNTVLVPIYISEV), 208-228 (LGTLCQIGTCLGIIFSLLLGI), 239-259 (TMLYVASMPGFLLALGMQFAV), 320-340 (VAFIGGSLFVLQQFAGINGVL), 357-377 (QASLYVGVTNFAGALCASYLI), 386-406 (LIGSYLGMAVSMFLIVYAVGF), 420-440 (GTLMYIFSFAIGAGPVTGLII), 452-472 (IMGFSFSVHWVSNFLVGLFFL), and 483-503 (VYASFGSVSLLAAAFSHLFTV).

The protein belongs to the major facilitator superfamily. Sugar transporter (TC 2.A.1.1) family.

The protein resides in the plastid. Its subcellular location is the chloroplast membrane. In terms of biological role, may be involved in the efflux of glucose towards the cytosol. In Arabidopsis thaliana (Mouse-ear cress), this protein is Probable plastidic glucose transporter 1.